The primary structure comprises 164 residues: Protein SprT (164 aa).

In terms of domain architecture, SprT-like spans 14 to 156 (QQAETFFKRT…LCRRCREPLV (143 aa)). Residue histidine 69 participates in Zn(2+) binding. Glutamate 70 is an active-site residue. Histidine 73 lines the Zn(2+) pocket.

It belongs to the SprT family. Zn(2+) serves as cofactor.

The protein resides in the cytoplasm. The chain is Protein SprT from Pseudomonas savastanoi pv. phaseolicola (strain 1448A / Race 6) (Pseudomonas syringae pv. phaseolicola (strain 1448A / Race 6)).